The sequence spans 54 residues: UPF0391 membrane protein TERTU_3637 (54 aa).

2 helical membrane-spanning segments follow: residues tryptophan 4–alanine 24 and serine 29–glycine 49.

This sequence belongs to the UPF0391 family.

It localises to the cell membrane. The polypeptide is UPF0391 membrane protein TERTU_3637 (Teredinibacter turnerae (strain ATCC 39867 / T7901)).